We begin with the raw amino-acid sequence, 203 residues long: Dephospho-CoA kinase (203 aa).

Residues 6–203 enclose the DPCK domain; that stretch reads RLGITGGIAC…SLLGRGGKGG (198 aa). Residue 14–19 coordinates ATP; sequence ACGKSV.

It belongs to the CoaE family.

Its subcellular location is the cytoplasm. The catalysed reaction is 3'-dephospho-CoA + ATP = ADP + CoA + H(+). Its pathway is cofactor biosynthesis; coenzyme A biosynthesis; CoA from (R)-pantothenate: step 5/5. In terms of biological role, catalyzes the phosphorylation of the 3'-hydroxyl group of dephosphocoenzyme A to form coenzyme A. This Thermosynechococcus vestitus (strain NIES-2133 / IAM M-273 / BP-1) protein is Dephospho-CoA kinase.